Consider the following 89-residue polypeptide: Small ribosomal subunit protein uS15 (89 aa).

It belongs to the universal ribosomal protein uS15 family. Part of the 30S ribosomal subunit. Forms a bridge to the 50S subunit in the 70S ribosome, contacting the 23S rRNA.

One of the primary rRNA binding proteins, it binds directly to 16S rRNA where it helps nucleate assembly of the platform of the 30S subunit by binding and bridging several RNA helices of the 16S rRNA. Functionally, forms an intersubunit bridge (bridge B4) with the 23S rRNA of the 50S subunit in the ribosome. The chain is Small ribosomal subunit protein uS15 from Halalkalibacterium halodurans (strain ATCC BAA-125 / DSM 18197 / FERM 7344 / JCM 9153 / C-125) (Bacillus halodurans).